The primary structure comprises 146 residues: Hemoglobin subunit beta (146 aa).

One can recognise a Globin domain in the interval 2–146; that stretch reads HWSAEEKQLI…VAHALARKYH (145 aa). 2 residues coordinate heme b: His63 and His92.

It belongs to the globin family. As to quaternary structure, heterotetramer of two alpha chains and two beta chains. Red blood cells.

In terms of biological role, involved in oxygen transport from the lung to the various peripheral tissues. This Phoenicopterus ruber (American flamingo) protein is Hemoglobin subunit beta (HBB).